An 85-amino-acid chain; its full sequence is Large ribosomal subunit protein bL27 (85 aa).

The segment at 1–20 (MATKKAGGSTRNGRDSEAKR) is disordered.

It belongs to the bacterial ribosomal protein bL27 family.

In Histophilus somni (strain 129Pt) (Haemophilus somnus), this protein is Large ribosomal subunit protein bL27.